The following is a 155-amino-acid chain: Small ribosomal subunit protein uS8m (155 aa).

Belongs to the universal ribosomal protein uS8 family. In terms of assembly, component of the mitochondrial small ribosomal subunit (mt-SSU). Mature yeast 74S mitochondrial ribosomes consist of a small (37S) and a large (54S) subunit. The 37S small subunit contains a 15S ribosomal RNA (15S mt-rRNA) and 34 different proteins. The 54S large subunit contains a 21S rRNA (21S mt-rRNA) and 46 different proteins.

It is found in the mitochondrion. In terms of biological role, component of the mitochondrial ribosome (mitoribosome), a dedicated translation machinery responsible for the synthesis of mitochondrial genome-encoded proteins, including at least some of the essential transmembrane subunits of the mitochondrial respiratory chain. The mitoribosomes are attached to the mitochondrial inner membrane and translation products are cotranslationally integrated into the membrane. The protein is Small ribosomal subunit protein uS8m (MRPS8) of Saccharomyces cerevisiae (strain ATCC 204508 / S288c) (Baker's yeast).